Consider the following 99-residue polypeptide: Large ribosomal subunit protein uL23 (99 aa).

It belongs to the universal ribosomal protein uL23 family. Part of the 50S ribosomal subunit. Contacts protein L29, and trigger factor when it is bound to the ribosome.

One of the early assembly proteins it binds 23S rRNA. One of the proteins that surrounds the polypeptide exit tunnel on the outside of the ribosome. Forms the main docking site for trigger factor binding to the ribosome. The sequence is that of Large ribosomal subunit protein uL23 from Lachnoclostridium phytofermentans (strain ATCC 700394 / DSM 18823 / ISDg) (Clostridium phytofermentans).